The following is a 101-amino-acid chain: Small ribosomal subunit protein uS10 (101 aa).

Belongs to the universal ribosomal protein uS10 family. As to quaternary structure, part of the 30S ribosomal subunit.

Functionally, involved in the binding of tRNA to the ribosomes. The chain is Small ribosomal subunit protein uS10 from Ureaplasma parvum serovar 3 (strain ATCC 27815 / 27 / NCTC 11736).